A 427-amino-acid polypeptide reads, in one-letter code: MTEAMKITLSTQPADARWGEKATYSINNDGITLHLNGADDLGLIQRAARKIDGLGIKHVQLSGEGWDADRCWAFWQGYKAPKGTRKVEWPDLDDAQRQELDNRLMIIDWVRDTINAPAEELGPSQLAQRAVDLISNVAGDRVTYRITKGEDLREQGYMGLHTVGRASERSPVLLALDYNPTGDKEAPVYACLVGKGITFDSGGYSIKQTAFMDSMKSDMGGAATVTGALAFAITRGLNKRVKLFLCCADNLISGNAFKLGDIITYRNGKKVEVMNTDAEGRLVLADGLIDASAQKPEMIIDAATLTGAAKTALGNDYHALFSFDDALAGRLLASASQENEPFWRLPLAEFHRSQLPSNFAELNNTGSAAYPAGASTAAGFLSHFVENYQQGWLHIDCSATYRKAPVEQWSAGATGLGVRTIANLLTA.

Residues Lys195 and Asp200 each contribute to the Mn(2+) site. The active site involves Lys207. Residues Asp218, Asp277, and Glu279 each contribute to the Mn(2+) site. Arg281 is an active-site residue.

It belongs to the peptidase M17 family. Homohexamer. It depends on Mn(2+) as a cofactor.

Its subcellular location is the cytoplasm. The enzyme catalyses Release of an N-terminal amino acid, Xaa, from a peptide or arylamide. Xaa is preferably Glu or Asp but may be other amino acids, including Leu, Met, His, Cys and Gln.. Functionally, probably plays an important role in intracellular peptide degradation. The protein is Peptidase B of Shigella boydii serotype 18 (strain CDC 3083-94 / BS512).